The sequence spans 350 residues: Autophagy-related protein 3 (350 aa).

The flexible region stretch occupies residues Asn-85 to Asp-166. A disordered region spans residues Val-97–Gly-171. Residues Glu-102–Trp-113 are compositionally biased toward basic and acidic residues. The segment covering Asp-146–Glu-161 has biased composition (acidic residues). The active-site Glycyl thioester intermediate is Cys-244. The handle region stretch occupies residues Pro-248 to Gln-326. An N6-acetyllysine mark is found at Lys-262 and Lys-267.

It belongs to the ATG3 family. As to quaternary structure, monomer. Interacts with ATG8 through an intermediate thioester bond through the C-terminal Gly of ATG8. Also interacts with the 40 amino acid C-terminal region of the E1-like ATG7 enzyme. Also interacts with the ATG12-ATG5 conjugate. Interacts with HAT1. Acetylated by HAT1 at Lys-262 and Lys-267, which affects the interaction with ATG8 and prevents autophagy during both appressorium development and nutrient starvation.

The protein localises to the preautophagosomal structure. Its subcellular location is the cytoplasm. In terms of biological role, E2 conjugating enzyme required for the cytoplasm to vacuole transport (Cvt) and autophagy. Required for selective autophagic degradation of the nucleus (nucleophagy) as well as for mitophagy which contributes to regulate mitochondrial quantity and quality by eliminating the mitochondria to a basal level to fulfill cellular energy requirements and preventing excess ROS production. Responsible for the E2-like covalent binding of phosphatidylethanolamine to the C-terminal Gly of ATG8. The ATG12-ATG5 conjugate plays a role of an E3 and promotes the transfer of ATG8 from ATG3 to phosphatidylethanolamine (PE). This step is required for the membrane association of ATG8. The formation of the ATG8-phosphatidylethanolamine conjugate is essential for autophagy and for the cytoplasm to vacuole transport (Cvt). The ATG8-PE conjugate mediates tethering between adjacent membranes and stimulates membrane hemifusion, leading to expansion of the autophagosomal membrane during autophagy. Plays a role in appressorium formation and pathogenicity. The sequence is that of Autophagy-related protein 3 from Pyricularia oryzae (strain 70-15 / ATCC MYA-4617 / FGSC 8958) (Rice blast fungus).